We begin with the raw amino-acid sequence, 394 residues long: Stearoyl-[acyl-carrier-protein] 9-desaturase 1, chloroplastic (394 aa).

The transit peptide at 1 to 37 directs the protein to the chloroplast; it reads MVMAMDRIALFSSSSSVYHHGSSHSHGSKSSRVFTIR. Fe cation contacts are provided by Glu135, Glu173, His176, Glu226, Glu259, and His262.

Belongs to the fatty acid desaturase type 2 family. As to quaternary structure, homodimer. Requires Fe(2+) as cofactor. Ubiquitously expressed.

The protein resides in the plastid. It localises to the chloroplast. It catalyses the reaction octadecanoyl-[ACP] + 2 reduced [2Fe-2S]-[ferredoxin] + O2 + 2 H(+) = (9Z)-octadecenoyl-[ACP] + 2 oxidized [2Fe-2S]-[ferredoxin] + 2 H2O. The protein operates within lipid metabolism; fatty acid metabolism. In terms of biological role, converts stearoyl-ACP to oleoyl-ACP by introduction of a cis double bond between carbons 9 and 10 of the acyl chain. This is Stearoyl-[acyl-carrier-protein] 9-desaturase 1, chloroplastic (S-ACP-DES1) from Arabidopsis thaliana (Mouse-ear cress).